A 459-amino-acid chain; its full sequence is Heat stress transcription factor A-4d (459 aa).

Positions A127–E189 form a coiled coil. Residues L141–L191 are hydrophobic repeat HR-A/B. The short motif at S209 to R213 is the Nuclear localization signal element. Residues Y364–T388 are compositionally biased toward polar residues. The interval Y364–V398 is disordered. An AHA motif is present at residues D397 to E406.

Belongs to the HSF family. Class A subfamily. In terms of assembly, homotrimer. Post-translationally, exhibits temperature-dependent phosphorylation.

It is found in the nucleus. Its function is as follows. Transcriptional regulator that specifically binds DNA of heat shock promoter elements (HSE). In Oryza sativa subsp. japonica (Rice), this protein is Heat stress transcription factor A-4d (HSFA4D).